The primary structure comprises 119 residues: MSNIIKQIEDEQLKQDLPTFAPGDTVVVQVKVKEGDRERLQAFEGVVIAKRNRGLHSAFTVRKISNGEGVERAFQTHSPVVDSITVKRRGLVRRAKLYYLRERSGKSARIKEKLVRKSS.

This sequence belongs to the bacterial ribosomal protein bL19 family.

Its function is as follows. This protein is located at the 30S-50S ribosomal subunit interface and may play a role in the structure and function of the aminoacyl-tRNA binding site. The protein is Large ribosomal subunit protein bL19 of Photobacterium profundum (strain SS9).